Reading from the N-terminus, the 477-residue chain is Glycogen synthase (477 aa).

Residue K15 coordinates ADP-alpha-D-glucose.

Belongs to the glycosyltransferase 1 family. Bacterial/plant glycogen synthase subfamily.

The catalysed reaction is [(1-&gt;4)-alpha-D-glucosyl](n) + ADP-alpha-D-glucose = [(1-&gt;4)-alpha-D-glucosyl](n+1) + ADP + H(+). It participates in glycan biosynthesis; glycogen biosynthesis. Functionally, synthesizes alpha-1,4-glucan chains using ADP-glucose. This Shigella flexneri serotype 5b (strain 8401) protein is Glycogen synthase.